Here is a 722-residue protein sequence, read N- to C-terminus: Zinc finger protein 219 (722 aa).

Residues 1-21 (MEGSRPRAPSGHLAPSPPAFD) are disordered. Ser16 carries the post-translational modification Phosphoserine. C2H2-type zinc fingers lie at residues 57–79 (FPCP…LRAH) and 85–107 (FQCP…LRTH). Positions 137 to 160 (ARSSGGMQATPATEGLARPQAPSS) are disordered. 2 C2H2-type zinc fingers span residues 163–186 (FRCP…HILH) and 189–212 (WKCG…LTAH). Residues 215-275 (PERPLAATSA…EEPPAPPEFR (61 aa)) are disordered. Pro residues-rich tracts occupy residues 225–247 (APPP…PQPE) and 259–272 (TPAP…PAPP). C2H2-type zinc fingers lie at residues 274 to 296 (FRCQ…MRKH) and 302 to 324 (HACP…MKVH). A disordered region spans residues 384–495 (LRAGEGRPNG…GTRPEGGRGA (112 aa)). Over residues 390–404 (RPNGEGAEPGPGRSF) the composition is skewed to gly residues. Residues 425 to 438 (EPEEEEEVVEAEEE) are compositionally biased toward acidic residues. Residues 463 to 477 (SASAAGAQARSTATQ) show a composition bias toward low complexity. 2 consecutive C2H2-type zinc fingers follow at residues 498–520 (KDCP…LRVH) and 526–548 (YKCP…LQRH). 2 disordered regions span residues 542-648 (KYHL…LHRC) and 668-722 (HHSR…GQER). Residues 558–568 (PGPPPEPPPPS) are compositionally biased toward pro residues. The segment covering 634-643 (GPGGEAGPGG) has biased composition (gly residues). A C2H2-type 9 zinc finger spans residues 646 to 668 (HRCLFCPFATGAPELMALHLQVH). Residues 668–677 (HHSRRARGRR) are compositionally biased toward basic residues. Ser692 carries the phosphoserine modification. Phosphothreonine is present on Thr695. Residue Ser698 is modified to Phosphoserine.

The protein belongs to the krueppel C2H2-type zinc-finger protein family. In terms of assembly, interacts with SOX9 (via C-terminus). In terms of tissue distribution, ubiquitous.

The protein localises to the nucleus. Transcriptional regulator. Recognizes and binds 2 copies of the core DNA sequence motif 5'-GGGGG-3'. Binds to the HMGN1 promoter and may repress HMGN1 expression. Regulates SNCA expression in primary cortical neurons. Binds to the COL2A1 promoter and activates COL2A1 expression, as part of a complex with SOX9. Plays a role in chondrocyte differentiation. The sequence is that of Zinc finger protein 219 (ZNF219) from Homo sapiens (Human).